The following is a 337-amino-acid chain: Holliday junction branch migration complex subunit RuvB (337 aa).

The tract at residues 1 to 20 (MQTRFVSPVNHDEEQDEPSV) is disordered. Positions 1–181 (MQTRFVSPVN…FGIILRLDLY (181 aa)) are large ATPase domain (RuvB-L). ATP contacts are provided by residues arginine 21, glycine 62, lysine 65, threonine 66, threonine 67, 128–130 (EDY), arginine 171, tyrosine 181, and arginine 218. Threonine 66 lines the Mg(2+) pocket. The tract at residues 182–252 (DPSELTVIVT…IANTALFALG (71 aa)) is small ATPAse domain (RuvB-S). Residues 255 to 337 (QKGLDILDRR…SHTRDLTSFL (83 aa)) are head domain (RuvB-H). DNA-binding residues include arginine 310 and arginine 315.

This sequence belongs to the RuvB family. In terms of assembly, homohexamer. Forms an RuvA(8)-RuvB(12)-Holliday junction (HJ) complex. HJ DNA is sandwiched between 2 RuvA tetramers; dsDNA enters through RuvA and exits via RuvB. An RuvB hexamer assembles on each DNA strand where it exits the tetramer. Each RuvB hexamer is contacted by two RuvA subunits (via domain III) on 2 adjacent RuvB subunits; this complex drives branch migration. In the full resolvosome a probable DNA-RuvA(4)-RuvB(12)-RuvC(2) complex forms which resolves the HJ.

The protein resides in the cytoplasm. It catalyses the reaction ATP + H2O = ADP + phosphate + H(+). Functionally, the RuvA-RuvB-RuvC complex processes Holliday junction (HJ) DNA during genetic recombination and DNA repair, while the RuvA-RuvB complex plays an important role in the rescue of blocked DNA replication forks via replication fork reversal (RFR). RuvA specifically binds to HJ cruciform DNA, conferring on it an open structure. The RuvB hexamer acts as an ATP-dependent pump, pulling dsDNA into and through the RuvAB complex. RuvB forms 2 homohexamers on either side of HJ DNA bound by 1 or 2 RuvA tetramers; 4 subunits per hexamer contact DNA at a time. Coordinated motions by a converter formed by DNA-disengaged RuvB subunits stimulates ATP hydrolysis and nucleotide exchange. Immobilization of the converter enables RuvB to convert the ATP-contained energy into a lever motion, pulling 2 nucleotides of DNA out of the RuvA tetramer per ATP hydrolyzed, thus driving DNA branch migration. The RuvB motors rotate together with the DNA substrate, which together with the progressing nucleotide cycle form the mechanistic basis for DNA recombination by continuous HJ branch migration. Branch migration allows RuvC to scan DNA until it finds its consensus sequence, where it cleaves and resolves cruciform DNA. The protein is Holliday junction branch migration complex subunit RuvB of Methanospirillum hungatei JF-1 (strain ATCC 27890 / DSM 864 / NBRC 100397 / JF-1).